Consider the following 82-residue polypeptide: MGSFSIWHWLIVLLVVVMIFGTKKLRNMGSDLGGAVKGFKDGMKDGSTTDAPAASSAPAAQVTGQPANSDKSTIDVEARQKS.

The helical transmembrane segment at 1–21 (MGSFSIWHWLIVLLVVVMIFG) threads the bilayer. Residues 39–82 (FKDGMKDGSTTDAPAASSAPAAQVTGQPANSDKSTIDVEARQKS) are disordered. The span at 51–60 (APAASSAPAA) shows a compositional bias: low complexity. Residues 62–71 (VTGQPANSDK) show a composition bias toward polar residues. A compositionally biased stretch (basic and acidic residues) spans 72 to 82 (STIDVEARQKS).

This sequence belongs to the TatA/E family. As to quaternary structure, the Tat system comprises two distinct complexes: a TatABC complex, containing multiple copies of TatA, TatB and TatC subunits, and a separate TatA complex, containing only TatA subunits. Substrates initially bind to the TatABC complex, which probably triggers association of the separate TatA complex to form the active translocon.

Its subcellular location is the cell inner membrane. In terms of biological role, part of the twin-arginine translocation (Tat) system that transports large folded proteins containing a characteristic twin-arginine motif in their signal peptide across membranes. TatA could form the protein-conducting channel of the Tat system. The chain is Sec-independent protein translocase protein TatA from Variovorax paradoxus (strain S110).